Here is a 291-residue protein sequence, read N- to C-terminus: Probable alpha-L-glutamate ligase (291 aa).

The ATP-grasp domain maps to 104–287 (HQLLASQGID…VAGTIIQHLE (184 aa)). ATP is bound by residues K141, 178–179 (EF), D187, and 211–213 (RSN). D248, E260, and N262 together coordinate Mg(2+). Mn(2+) is bound by residues D248, E260, and N262.

It belongs to the RimK family. It depends on Mg(2+) as a cofactor. Mn(2+) serves as cofactor.

The chain is Probable alpha-L-glutamate ligase from Xanthomonas campestris pv. campestris (strain 8004).